We begin with the raw amino-acid sequence, 289 residues long: 4-diphosphocytidyl-2-C-methyl-D-erythritol kinase (289 aa).

Lys16 is a catalytic residue. An ATP-binding site is contributed by 99–109 (PMGGGIGGGSS). Asp141 is an active-site residue.

This sequence belongs to the GHMP kinase family. IspE subfamily.

It carries out the reaction 4-CDP-2-C-methyl-D-erythritol + ATP = 4-CDP-2-C-methyl-D-erythritol 2-phosphate + ADP + H(+). The protein operates within isoprenoid biosynthesis; isopentenyl diphosphate biosynthesis via DXP pathway; isopentenyl diphosphate from 1-deoxy-D-xylulose 5-phosphate: step 3/6. In terms of biological role, catalyzes the phosphorylation of the position 2 hydroxy group of 4-diphosphocytidyl-2C-methyl-D-erythritol. The chain is 4-diphosphocytidyl-2-C-methyl-D-erythritol kinase from Ralstonia nicotianae (strain ATCC BAA-1114 / GMI1000) (Ralstonia solanacearum).